The following is a 509-amino-acid chain: MNNTYYITTPIYYVNDVPHIGHAYTSVASDVIARFMRLSGHEVMFLTGTDEHGQKVEKAAIDKNIDPQKFTDQTSQSFRHLMTAMHISNDDFIRTTEERHKKAVAIFWQKLLDNGSIYEGFYEGWYAVRDEAFYDESELTADKLAPTGAAVEWVKEPSYFFNLSKWQDKLLEFYEANPDFIRPISRRNEVISFVKSGLKDLSVSRTTFNWGIKVPNDNKHVIYVWLDALANYISALGYPDQNSNYGKFWPANLQVVGKDILRFHAVYWPAFLMAAEIPLPKTIMAHGWWTNEGQKISKSLGNTIDPIKLIEEFGVDQVRYFLMREITFGADGNFARSNLITRINSELSNKIGNLLQRTTSFVYKNNDGKVPAITQDAINKIYELPLLKTAINSAKQNILLMEKTEINKILDNIINLAEEANIYIDSEAPWNLKKTDPEKMLEVLYALLETLRYIAVMLQAFMPSSAGKMLDQLGVNTEERLFKHLSLEFALTSASDILEPVIVFPRFEE.

Positions 12 to 22 match the 'HIGH' region motif; sequence YYVNDVPHIGH. The 'KMSKS' region motif lies at 295 to 299; the sequence is KISKS. Lys298 contacts ATP.

The protein belongs to the class-I aminoacyl-tRNA synthetase family. MetG type 2B subfamily. Monomer.

The protein resides in the cytoplasm. It catalyses the reaction tRNA(Met) + L-methionine + ATP = L-methionyl-tRNA(Met) + AMP + diphosphate. Functionally, is required not only for elongation of protein synthesis but also for the initiation of all mRNA translation through initiator tRNA(fMet) aminoacylation. The chain is Methionine--tRNA ligase from Rickettsia bellii (strain RML369-C).